A 985-amino-acid polypeptide reads, in one-letter code: Alpha-glucosidase (985 aa).

Positions 1–25 (MVKLTHLLARAWLVPLAYGASQSLL) are cleaved as a signal peptide. Thr-36 is a glycosylation site (O-linked (Man) threonine). 5 N-linked (GlcNAc...) asparagine glycosylation sites follow: Asn-124, Asn-143, Asn-218, Asn-347, and Asn-422. Asp-490 (nucleophile) is an active-site residue. Residue Glu-493 is part of the active site. N-linked (GlcNAc...) asparagine glycans are attached at residues Asn-506, Asn-534, and Asn-537. O-linked (Man) serine glycans are attached at residues Ser-545 and Ser-550. A glycan (O-linked (Man) threonine) is linked at Thr-559. An O-linked (Man) serine glycan is attached at Ser-560. Thr-561 carries O-linked (Man) threonine glycosylation. O-linked (Man) serine glycosylation is present at Ser-562. Thr-571 carries an O-linked (Man) threonine glycan. 2 N-linked (GlcNAc...) asparagine glycosylation sites follow: Asn-601 and Asn-623. Asp-660 functions as the Proton donor in the catalytic mechanism. Asn-835 and Asn-881 each carry an N-linked (GlcNAc...) asparagine glycan. A glycan (O-linked (Man) serine) is linked at Ser-895. Residues Asn-899, Asn-957, and Asn-970 are each glycosylated (N-linked (GlcNAc...) asparagine).

Belongs to the glycosyl hydrolase 31 family. In terms of processing, the O-linked saccharide is not identified, but is probably mannose.

It carries out the reaction Hydrolysis of terminal, non-reducing (1-&gt;4)-linked alpha-D-glucose residues with release of alpha-D-glucose.. Hydrolyzes malto-oligosaccharides, but has a low activity toward soluble starch. This chain is Alpha-glucosidase (aglA), found in Aspergillus niger.